A 318-amino-acid chain; its full sequence is NADH-ubiquinone oxidoreductase chain 1 (318 aa).

The next 8 membrane-spanning stretches (helical) occupy residues 3 to 23 (FMNL…LTLL), 69 to 89 (VLFI…WIPL), 102 to 122 (ILFM…SGWA), 146 to 166 (LAII…STLI), 171 to 191 (HIWL…STLA), 222 to 242 (LFFL…IILF), 253 to 273 (ELYT…FLWV), and 294 to 314 (LPLT…LAGI).

The protein belongs to the complex I subunit 1 family. As to quaternary structure, core subunit of respiratory chain NADH dehydrogenase (Complex I) which is composed of 45 different subunits.

Its subcellular location is the mitochondrion inner membrane. It catalyses the reaction a ubiquinone + NADH + 5 H(+)(in) = a ubiquinol + NAD(+) + 4 H(+)(out). Functionally, core subunit of the mitochondrial membrane respiratory chain NADH dehydrogenase (Complex I) which catalyzes electron transfer from NADH through the respiratory chain, using ubiquinone as an electron acceptor. Essential for the catalytic activity and assembly of complex I. This is NADH-ubiquinone oxidoreductase chain 1 (MT-ND1) from Cnephaeus nilssonii (Northern bat).